Consider the following 81-residue polypeptide: MNDVFSTAQHKLDALGLRCPEPVMMVRKTVRQMAQGETLLIIADDPATTRDIPSFCEFMDHTLIASETSQTPYQYLIKKGL.

Cysteine 19 acts as the Cysteine persulfide intermediate in catalysis.

Belongs to the sulfur carrier protein TusA family.

It localises to the cytoplasm. Functionally, sulfur carrier protein which probably makes part of a sulfur-relay system. This is Sulfur carrier protein TusA from Shewanella sp. (strain MR-4).